Here is a 278-residue protein sequence, read N- to C-terminus: Tryptophan synthase alpha chain (278 aa).

Residues Glu50 and Asp61 each act as proton acceptor in the active site.

The protein belongs to the TrpA family. In terms of assembly, tetramer of two alpha and two beta chains.

It carries out the reaction (1S,2R)-1-C-(indol-3-yl)glycerol 3-phosphate + L-serine = D-glyceraldehyde 3-phosphate + L-tryptophan + H2O. It functions in the pathway amino-acid biosynthesis; L-tryptophan biosynthesis; L-tryptophan from chorismate: step 5/5. Functionally, the alpha subunit is responsible for the aldol cleavage of indoleglycerol phosphate to indole and glyceraldehyde 3-phosphate. The chain is Tryptophan synthase alpha chain from Afipia carboxidovorans (strain ATCC 49405 / DSM 1227 / KCTC 32145 / OM5) (Oligotropha carboxidovorans).